A 154-amino-acid polypeptide reads, in one-letter code: MKKEDYLPNLVDIESPLSDEELYVLSQQYNNEGDFVSVQTRFNYAWGLIKSRKVEDQQLGVQILAQVYKDTPSRRRECLYYLAIGSYKLGEYTDARKYCDLLLQIEPDDPQSAKLRQIIEDKLAKEGMIGIAIVGGVIAVGAAVLGAVLSQKKR.

Residues 1-128 lie on the Cytoplasmic side of the membrane; sequence MKKEDYLPNL…IEDKLAKEGM (128 aa). One copy of the TPR repeat lies at 76–109; that stretch reads RECLYYLAIGSYKLGEYTDARKYCDLLLQIEPDD. Residues 129–149 form a helical membrane-spanning segment; sequence IGIAIVGGVIAVGAAVLGAVL. Residues 150 to 154 are Mitochondrial intermembrane-facing; the sequence is SQKKR.

The protein belongs to the FIS1 family.

The protein resides in the mitochondrion outer membrane. Its function is as follows. Has a role in mitochondrial fission. Has a role in outer membrane fission but not matrix separation. This is Mitochondrial fission 1 protein (FIS1) from Yarrowia lipolytica (strain CLIB 122 / E 150) (Yeast).